An 876-amino-acid polypeptide reads, in one-letter code: Ergothioneine biosynthesis protein 1 (876 aa).

The tract at residues 36–350 (IIDIRRVAVE…TYGNEYGLHL (315 aa)) is L-histidine N(alpha)-methyltransferase. Tyr88 contacts L-histidine. S-adenosyl-L-methionine is bound by residues Gly119, Lys125, and Asp146. L-histidine is bound by residues Asn202, Tyr242, and 315–317 (EQS). Positions 378–874 (ALWATWDVVT…YAWVGARVVR (497 aa)) are hercynylcysteine S-oxide synthase. Fe cation-binding residues include His413, His506, and His510. Disordered regions lie at residues 631–650 (GTTN…QQLP) and 732–761 (TNNG…SNTT). The segment covering 744–758 (PSSETPAESSSPSDS) has biased composition (low complexity).

In the N-terminal section; belongs to the methyltransferase superfamily. EgtD family. The protein in the C-terminal section; belongs to the EgtB family. Fe(2+) is required as a cofactor.

The protein localises to the cytoplasm. Its subcellular location is the nucleus. The catalysed reaction is L-histidine + 3 S-adenosyl-L-methionine = hercynine + 3 S-adenosyl-L-homocysteine + 3 H(+). The enzyme catalyses hercynine + L-cysteine + O2 = S-(hercyn-2-yl)-L-cysteine S-oxide + H2O. It participates in amino-acid biosynthesis; ergothioneine biosynthesis. In terms of biological role, catalyzes the SAM-dependent triple methylation of the alpha-amino group of histidine to form hercynine and subsequent conjugation with cysteine and oxygen to form hercynylcysteine sulfoxide, the first two steps in the biosynthesis pathway of ergothioneine. Ergothioneine is an unusual thio-histidine betaine amino acid that acts as an antioxidant against peroxide in conidia and contributes to conidial longevity. This chain is Ergothioneine biosynthesis protein 1, found in Neurospora crassa (strain ATCC 24698 / 74-OR23-1A / CBS 708.71 / DSM 1257 / FGSC 987).